A 1919-amino-acid polypeptide reads, in one-letter code: Disks large homolog 5 (1919 aa).

Residues 98 to 142 (AEGAGSTYSVLSTMPSDSESSSSLSSVGTTGKAPSPPPLLTDQQV) are disordered. Over residues 109-123 (STMPSDSESSSSLSS) the composition is skewed to low complexity. Residues serine 264 and serine 295 each carry the phosphoserine modification. The stretch at 383 to 599 (LNKATAQNKD…LEKEARFRQL (217 aa)) forms a coiled coil. PDZ domains are found at residues 620–710 (VVEF…RRRK) and 705–796 (VVRR…LKVF). Serine 900 carries the post-translational modification Phosphoserine. Disordered regions lie at residues 927 to 1122 (GVGE…FRPK), 1150 to 1187 (QEWAPYSPGHSSRHSNPPLYPSRPSVGTVPRSLTPSTT), 1201 to 1230 (SHRVGPCSSPPAARDAGPQGLHPSVQHQGR), 1245 to 1264 (EMRATHGSNSLPSSARLGSS), and 1271 to 1306 (AERIKIPSTPRYPRSVVGSERGSVSHSECSTPPQSP). A Phosphothreonine modification is found at threonine 984. Serine 1000 carries the post-translational modification Phosphoserine. A Phosphothreonine modification is found at threonine 1011. The segment covering 1017-1030 (RRSDSIKFQHRLET) has biased composition (basic and acidic residues). A Phosphoserine modification is found at serine 1021. Pro residues predominate over residues 1045–1055 (TSPPSALPPDV). Threonine 1183 bears the Phosphothreonine mark. Serine 1209 and serine 1263 each carry phosphoserine. 2 stretches are compositionally biased toward low complexity: residues 1252-1264 (SNSLPSSARLGSS) and 1284-1298 (RSVVGSERGSVSHSE). Serine 1334 bears the Phosphoserine mark. Positions 1350–1429 (HVKVQKGSEP…TITILAQYNP (80 aa)) constitute a PDZ 3 domain. The segment at 1434-1493 (LSSHSRSSSHLDPAGTHSTLQGSGTTTPEHPSVIDPLMEQDEGPSTPPAKQSSSRIAGDA) is disordered. Residues 1449–1462 (THSTLQGSGTTTPE) are compositionally biased toward polar residues. Residues 1501 to 1582 (RVVFIKKSQL…GVRLKVQYRP (82 aa)) enclose the PDZ 4 domain. The SH3 domain maps to 1593–1661 (GDSFYIRALY…PSKYVMDQEF (69 aa)). A Phosphoserine modification is found at serine 1666. The 184-residue stretch at 1722-1905 (DSVSLAYQRV…ICTQILAMVN (184 aa)) folds into the Guanylate kinase-like domain.

This sequence belongs to the MAGUK family. Interacts with MPP1. Interacts with CTNNB1 and with the third SH3 domain of SORBS3 to form a ternary complex. Interacts (via coiled-coil domain) with MARK3. Interacts (via PDZ domain 3) with STK3/MST2 and STK4/MST1. Interacts with SCRIB. Interacts with CTNB1, SMO and (via PDZ4 or guanylate kinase-like domain) with KIF7. As to expression, highly expressed in normal breast tissues and low-grade breast cancer tissues (at protein level). Highly expressed in the placenta and prostate. Expressed at a lower level in the thyroid, spinal cord, trachea, adrenal gland, skeletal muscle, pancreas, heart, brain, liver and kidney. A short splice product shows more limited expression, being absent from at least the brain.

The protein resides in the cell junction. Its subcellular location is the cell membrane. It is found in the postsynaptic density. The protein localises to the cytoplasm. It localises to the cytoskeleton. The protein resides in the cilium basal body. Its function is as follows. Acts as a regulator of the Hippo signaling pathway. Negatively regulates the Hippo signaling pathway by mediating the interaction of MARK3 with STK3/4, bringing them together to promote MARK3-dependent hyperphosphorylation and inactivation of STK3 kinase activity toward LATS1. Positively regulates the Hippo signaling pathway by mediating the interaction of SCRIB with STK4/MST1 and LATS1 which is important for the activation of the Hippo signaling pathway. Involved in regulating cell proliferation, maintenance of epithelial polarity, epithelial-mesenchymal transition (EMT), cell migration and invasion. Plays an important role in dendritic spine formation and synaptogenesis in cortical neurons; regulates synaptogenesis by enhancing the cell surface localization of N-cadherin. Acts as a positive regulator of hedgehog (Hh) signaling pathway. Plays a critical role in the early point of the SMO activity cycle by interacting with SMO at the ciliary base to induce the accumulation of KIF7 and GLI2 at the ciliary tip for GLI2 activation. This is Disks large homolog 5 (DLG5) from Homo sapiens (Human).